The chain runs to 534 residues: Apolipoprotein N-acyltransferase (534 aa).

The next 7 helical transmembrane spans lie at 18–38 (LLAI…GFFA), 39–59 (AMFL…ASPD), 74–94 (WLFG…ALLV), 105–125 (LAIL…VALA), 127–147 (IFWS…GLME), 178–198 (VIGA…PALA), and 209–229 (ALAV…LYVA). The 251-residue stretch at 246–496 (VQPDIDQAAK…TGFIDATVDR (251 aa)) folds into the CN hydrolase domain. E291 (proton acceptor) is an active-site residue. K355 is an active-site residue. C408 (nucleophile) is an active-site residue. The chain crosses the membrane as a helical span at residues 504 to 524 (TFPRQTYFWLTEALLILIALV).

The protein belongs to the CN hydrolase family. Apolipoprotein N-acyltransferase subfamily.

It localises to the cell inner membrane. The catalysed reaction is N-terminal S-1,2-diacyl-sn-glyceryl-L-cysteinyl-[lipoprotein] + a glycerophospholipid = N-acyl-S-1,2-diacyl-sn-glyceryl-L-cysteinyl-[lipoprotein] + a 2-acyl-sn-glycero-3-phospholipid + H(+). The protein operates within protein modification; lipoprotein biosynthesis (N-acyl transfer). Catalyzes the phospholipid dependent N-acylation of the N-terminal cysteine of apolipoprotein, the last step in lipoprotein maturation. The chain is Apolipoprotein N-acyltransferase from Rhizobium leguminosarum bv. trifolii (strain WSM2304).